A 300-amino-acid polypeptide reads, in one-letter code: Merozoite surface protein 2 (300 aa).

The first 20 residues, 1-20 (MKVIKTLSIINFFIFVTFNI), serve as a signal peptide directing secretion. Residues Asn-22 and Asn-36 are each glycosylated (N-linked (GlcNAc...) asparagine). The polymorphic region stretch occupies residues 44–226 (EESKPPTGAV…EQTESPELQS (183 aa)). The 1; inverted repeat unit spans residues 51–58 (GAVAGSGA). A 7 X 8 AA tandem repeats of G-S-G-A-G-A-V-A region spans residues 51–74 (GAVAGSGAGAGSGAGAVAGSGAGA). 5 repeat units span residues 61 to 68 (GSGAGAVA), 69 to 76 (GSGAGAVA), 77 to 84 (GSGAGAVA), 85 to 92 (GSGAGAVA), and 93 to 100 (GSGAGAVA). Residues 103–110 (GAVAGSGA) form a 7; inverted repeat. The segment at 111-261 (GNGANPGADA…DSQKECTDGN (151 aa)) is disordered. Over residues 124–148 (PSTPATTTTTTTTNDAEASTSTSSE) the composition is skewed to low complexity. Positions 149-165 (NRNHNNAETNPKGKGEV) are enriched in basic and acidic residues. Composition is skewed to polar residues over residues 167 to 193 (KPNQ…NVPR) and 200 to 228 (KSPT…QSAP). Asn-177 carries N-linked (GlcNAc...) asparagine glycosylation. Asn-249 is a glycosylation site (N-linked (GlcNAc...) asparagine). A disulfide bridge connects residues Cys-257 and Cys-265. Residues Asn-273 and Asn-274 are each glycosylated (N-linked (GlcNAc...) asparagine). Asn-274 carries GPI-anchor amidated asparagine lipidation. Positions 275–300 (SSNIASINKFVVLISATLVLSFAIFI) are cleaved as a propeptide — removed in mature form.

It is found in the cell membrane. In terms of biological role, may play a role in the merozoite attachment to the erythrocyte. In Plasmodium falciparum (isolate mad71 / Papua New Guinea), this protein is Merozoite surface protein 2.